We begin with the raw amino-acid sequence, 792 residues long: DEAD-box ATP-dependent RNA helicase 40 (792 aa).

Low complexity predominate over residues 1-16 (MSAGTAPAAPRYAPDD). 2 disordered regions span residues 1 to 25 (MSAGTAPAAPRYAPDDPSLPKPWRG) and 44 to 118 (TQYE…PLPA). The region spanning 17 to 51 (PSLPKPWRGLVDGTTGYLYYWNPETNITQYEKPLP) is the WW domain. The segment covering 52–68 (PEDQLPPPPPLPPPPPR) has biased composition (pro residues). Composition is skewed to basic and acidic residues over residues 70-80 (GRGDRDRDRRD) and 88-108 (PRRDHRDRDRDRDRRHDDHRS). Residues 150 to 178 (TSFETGGFPPEILKEIQRAGFSSPTPIQA) carry the Q motif motif. The region spanning 181–355 (WPIALQCQDV…EDLLVHPVQV (175 aa)) is the Helicase ATP-binding domain. Residue 194–201 (AKTGSGKT) coordinates ATP. The DEAD box signature appears at 303–306 (DEAD). The 145-residue stretch at 384-528 (RLEQILRSQD…RVPRDLADMA (145 aa)) folds into the Helicase C-terminal domain. The interval 523-792 (DLADMASRGG…NATVQNGGDN (270 aa)) is disordered. Composition is skewed to basic and acidic residues over residues 543–560 (TRSDRGGSHSELDSRYGG) and 572–588 (DSSRSSRRHDYGDDGRS). Composition is skewed to basic residues over residues 589–599 (RRSGRGRSRSR) and 609–654 (RSPK…RRHE). Positions 668 to 708 (GHGERKRTPEADPSRNHTNHSDPKDDRHPEDGKVGKVDLDR) are enriched in basic and acidic residues. Residues 725 to 739 (GKTSRSVSPGNQVEG) show a composition bias toward polar residues. The segment covering 764–777 (DEEEGMIDEDGEIA) has biased composition (acidic residues).

Belongs to the DEAD box helicase family. DDX5/DBP2 subfamily.

It is found in the nucleus. The catalysed reaction is ATP + H2O = ADP + phosphate + H(+). In terms of biological role, ATP-dependent RNA helicase involved nonsense-mediated mRNA decay and ribosome biogenesis through rRNA processing. The chain is DEAD-box ATP-dependent RNA helicase 40 from Oryza sativa subsp. japonica (Rice).